Here is an 835-residue protein sequence, read N- to C-terminus: Peptide transporter family 1 (835 aa).

11 helical membrane passes run isoleucine 86–alanine 106, phenylalanine 113–alanine 133, glycine 150–glycine 170, leucine 183–serine 203, phenylalanine 222–tryptophan 242, methionine 325–isoleucine 345, leucine 368–alanine 388, valine 401–valine 421, isoleucine 697–threonine 717, tryptophan 738–phenylalanine 758, and phenylalanine 765–phenylalanine 785. The disordered stretch occupies residues proline 814–phenylalanine 835. Over residues lysine 821–phenylalanine 835 the composition is skewed to basic and acidic residues.

It belongs to the major facilitator superfamily. Proton-dependent oligopeptide transporter (POT/PTR) (TC 2.A.17) family. In terms of tissue distribution, expressed specifically in the intestine.

The protein localises to the apical cell membrane. Low-affinity peptide transporter that is necessary for proton-dependent uptake of di- or tripeptides, and to a minor extent tetrapeptides, in the intestine. Transport is independent of sodium and chloride ions. Controls the uptake of dietary fatty acids, plays a role in fatty acid synthesis and is responsible for dipeptide-induced acidification of the intestine. Regulates cellular pH differences together with the antiporter protein, nhx-2. Amino acid uptake and absorption levels influence the insulin signaling/daf-2 and let-363/TOR pathways, subsequently affecting the stress response and longevity of the organism. It is required for the uptake of the L-enantiomers of various amino acids, including L-glutamate. In response to the availability of amino acid nutrients, may play a role in promoting reproduction and fertility. The sequence is that of Peptide transporter family 1 from Caenorhabditis elegans.